The following is a 528-amino-acid chain: MKKIMLLLMTLLLVSLPLAQEAQADASVYSYQGIISHMAPPASPPAKPKTPVEKKNAAQIDQYIQGLDYDKNNILVYDGEAVKNVPPKAGYKEGNQYIVVEKKKKSINQNNADIQVINSLASLTYPGALVKANSELVENQPDVLPVKRDSVTLSIDLPGMVNHDNEIVVQNATKSNINDGVNTLVDRWNNKYSEEYPNISAKIDYDQEMAYSESQLVAKFGAAFKAVNNSLNVNFGAISEGKVQEEVINFKQIYYTVNVNEPTSPSRFFGKSVTKENLQALGVNAENPPAYISSVAYGRDIFVKLSTSSHSTRVKAAFDTAFKGKSVKGDTELENIIQNASFKAVIYGGSAKDEVEIIDGDLSKLRDILKQGANFDKKNPGVPIAYTTNFLKDNQLAVVKNNSEYIETTSKAYSDGKINLDHSGAYVARFNVTWDEVSYDANGNEVVEHKKWSENDKDKLAHFTTSIYLPGNARNINIHAKECTGLAWEWWRTVVDDRNLPLVKNRNVCIWGTTLYPAYSDTVDNPIK.

An N-terminal signal peptide occupies residues 1–23 (MKKIMLLLMTLLLVSLPLAQEAQ). A run of 4 beta stranded transmembrane segments spans residues 213–226 (ESQLVAKFGAAFKA), 233–242 (VNFGAISEGK), 311–320 (STRVKAAFDT), and 328–340 (KGDTELENIIQNA). The Conserved undecapeptide signature appears at 482-492 (ECTGLAWEWWR). The Cholesterol binding signature appears at 514–515 (TL).

The protein belongs to the cholesterol-dependent cytolysin family. As to quaternary structure, homooligomeric pore complex of 35 to 50 subunits; when inserted in the host membrane.

Its subcellular location is the secreted. It is found in the host membrane. In terms of biological role, a cholesterol-dependent toxin that causes cytolysis by forming pores in cholesterol containing host membranes. After binding to target membranes, the protein undergoes a major conformation change, leading to its insertion in the host membrane and formation of an oligomeric pore complex. Cholesterol is required for binding to host membranes, membrane insertion and pore formation; cholesterol binding is mediated by a Thr-Leu pair in the C-terminus. Can be reversibly inactivated by oxidation. This chain is Ivanolysin (ilo), found in Listeria ivanovii.